Reading from the N-terminus, the 360-residue chain is NAD(P)H-quinone oxidoreductase subunit 1, chloroplastic (360 aa).

The next 9 membrane-spanning stretches (helical) occupy residues 27–47, 98–118, 129–149, 165–185, 203–223, 248–268, 269–289, 297–317, and 340–360; these read IWIF…VLVI, FSIG…VIPF, IGIF…LMSG, AAQS…ISLL, FWGW…ISSL, YSGI…LISS, LFVT…ISIL, IFGT…FLFI, and FLLP…LFSL.

The protein belongs to the complex I subunit 1 family. NDH is composed of at least 16 different subunits, 5 of which are encoded in the nucleus.

It localises to the plastid. The protein localises to the chloroplast thylakoid membrane. It catalyses the reaction a plastoquinone + NADH + (n+1) H(+)(in) = a plastoquinol + NAD(+) + n H(+)(out). It carries out the reaction a plastoquinone + NADPH + (n+1) H(+)(in) = a plastoquinol + NADP(+) + n H(+)(out). Its function is as follows. NDH shuttles electrons from NAD(P)H:plastoquinone, via FMN and iron-sulfur (Fe-S) centers, to quinones in the photosynthetic chain and possibly in a chloroplast respiratory chain. The immediate electron acceptor for the enzyme in this species is believed to be plastoquinone. Couples the redox reaction to proton translocation, and thus conserves the redox energy in a proton gradient. In Olimarabidopsis pumila (Dwarf rocket), this protein is NAD(P)H-quinone oxidoreductase subunit 1, chloroplastic.